Reading from the N-terminus, the 583-residue chain is MAEGDEAARGQQPHQGLWRRRRTSDPSAAVNHVSSTTSLGENYEDDDLVNSDEVMKKPCPVQIVLAHEDDHNFELDEEALEQILLQEHIRDLNIVVVSVAGAFRKGKSFLLDFMLRYMYNKDSQSWIGGNNEPLTGFTWRGGCERETTGIQVWNEVFVIDRPNGTKVAVLLMDTQGAFDSQSTIKDCATVFALSTMTSSVQVYNLSQNIQEDDLQHLQLFTEYGRLAMEEIYQKPFQTLMFLIRDWSYPYEHSYGLEGGKQFLEKRLQVKQNQHEELQNVRKHIHNCFSNLGCFLLPHPGLKVATNPSFDGRLKDIDEDFKRELRNLVPLLLAPENLVEKEISGSKVTCRDLVEYFKAYIKIYQGEELPHPKSMLQATAEANNLAAVAGARDTYCKSMEQVCGGDKPYIAPSDLERKHLDLKEVAIKQFRSVKKMGGDEFCRRYQDQLEAEIEETYANFIKHNDGKNIFYAARTPATLFAVMFAMYIISGLTGFIGLNSIAVLCNLVMGLALIFLCTWAYVKYSGEFREIGTVIDQIAETLWEQVLKPLGDNLMEENIRQSVTNSIKAGLTDQVSHHARLKTD.

A disordered region spans residues 1–44; it reads MAEGDEAARGQQPHQGLWRRRRTSDPSAAVNHVSSTTSLGENYE. An N-terminal hypervariable region (HVR) region spans residues 1–60; that stretch reads MAEGDEAARGQQPHQGLWRRRRTSDPSAAVNHVSSTTSLGENYEDDDLVNSDEVMKKPCP. Topologically, residues 1–476 are cytoplasmic; sequence MAEGDEAARG…NIFYAARTPA (476 aa). Residue Ser-24 is modified to Phosphoserine. In terms of domain architecture, GB1/RHD3-type G spans 91-336; it reads DLNIVVVSVA…LVPLLLAPEN (246 aa). Residues Arg-104, Lys-105, Gly-106, Lys-107, Ser-108, Phe-109, Gln-175, Arg-244, and Asp-245 each contribute to the GDP site. Arg-104, Lys-105, Gly-106, Lys-107, Ser-108, and Phe-109 together coordinate GTP. Ser-108 is a binding site for Mg(2+). GTP-binding residues include Arg-244 and Asp-245. Residues 256–284 adopt a coiled-coil conformation; sequence LEGGKQFLEKRLQVKQNQHEELQNVRKHI. At Lys-270 the chain carries N6-methyllysine. GDP is bound by residues Val-303 and Asn-306. Val-303 serves as a coordination point for GTP. The tract at residues 374–465 is 3HB (three-helix bundle) domain; it reads MLQATAEANN…YANFIKHNDG (92 aa). A linker region spans residues 466–474; it reads KNIFYAART. A helical membrane pass occupies residues 477–497; sequence TLFAVMFAMYIISGLTGFIGL. Residues 498–499 are Lumenal-facing; the sequence is NS. The chain crosses the membrane as a helical span at residues 500–520; the sequence is IAVLCNLVMGLALIFLCTWAY. The Cytoplasmic segment spans residues 521-583; that stretch reads VKYSGEFREI…VSHHARLKTD (63 aa). The autoinhibitory domain stretch occupies residues 547–583; sequence KPLGDNLMEENIRQSVTNSIKAGLTDQVSHHARLKTD.

Belongs to the TRAFAC class dynamin-like GTPase superfamily. GB1/RHD3 GTPase family. GB1 subfamily. As to quaternary structure, monomeric and homodimeric. The homodimer, transiently formed by two molecules on opposing membranes, is the active form mediating ER membrane fusion. Interacts with REEP5 and RTN3; these proteins are involved in endoplasmic reticulum tubular network organization. Interacts with ZFYVE27; both proteins are involved in endoplasmic reticulum tubular network organization. In terms of tissue distribution, expressed in peripheral tissues (at protein level).

It is found in the endoplasmic reticulum membrane. The catalysed reaction is GTP + H2O = GDP + phosphate + H(+). Its activity is regulated as follows. With its alternative C-terminus disrupting the autoinhibitory domain, this brain-specific isoform is probably more active at fusing ER membranes. Atlastin-2 (ATL2) is a membrane-anchored GTPase that mediates the GTP-dependent fusion of endoplasmic reticulum (ER) membranes, maintaining the continuous ER network. It facilitates the formation of three-way junctions where ER tubules intersect. Two atlastin-2 on neighboring ER tubules bind GTP and form loose homodimers through the GB1/RHD3-type G domains and 3HB regions. Upon GTP hydrolysis, the 3HB regions tighten, pulling the membranes together to drive their fusion. After fusion, the homodimer disassembles upon release of inorganic phosphate (Pi). Subsequently, GDP dissociates, resetting the monomers to a conformation ready for a new fusion cycle. The protein is Atlastin-2 of Homo sapiens (Human).